Consider the following 942-residue polypeptide: Isoleucine--tRNA ligase (942 aa).

Residues 58–68 (PYANGDIHIGH) carry the 'HIGH' region motif. Glutamate 566 provides a ligand contact to L-isoleucyl-5'-AMP. The 'KMSKS' region signature appears at 607–611 (KMSKS). Lysine 610 serves as a coordination point for ATP. Zn(2+) contacts are provided by cysteine 905, cysteine 908, cysteine 925, and cysteine 928.

It belongs to the class-I aminoacyl-tRNA synthetase family. IleS type 1 subfamily. In terms of assembly, monomer. Zn(2+) serves as cofactor.

The protein localises to the cytoplasm. It carries out the reaction tRNA(Ile) + L-isoleucine + ATP = L-isoleucyl-tRNA(Ile) + AMP + diphosphate. Catalyzes the attachment of isoleucine to tRNA(Ile). As IleRS can inadvertently accommodate and process structurally similar amino acids such as valine, to avoid such errors it has two additional distinct tRNA(Ile)-dependent editing activities. One activity is designated as 'pretransfer' editing and involves the hydrolysis of activated Val-AMP. The other activity is designated 'posttransfer' editing and involves deacylation of mischarged Val-tRNA(Ile). This is Isoleucine--tRNA ligase from Vibrio campbellii (strain ATCC BAA-1116).